We begin with the raw amino-acid sequence, 201 residues long: Recombination protein RecR (201 aa).

The C4-type zinc finger occupies 60–75 (CHECGNVDTSDPCTIC). Residues 83 to 178 (SILVVVEDVS…KVTKLAHGVP (96 aa)) form the Toprim domain.

It belongs to the RecR family.

Its function is as follows. May play a role in DNA repair. It seems to be involved in an RecBC-independent recombinational process of DNA repair. It may act with RecF and RecO. The protein is Recombination protein RecR of Methylobacterium nodulans (strain LMG 21967 / CNCM I-2342 / ORS 2060).